A 937-amino-acid chain; its full sequence is Isoleucine--tRNA ligase (937 aa).

The 'HIGH' region motif lies at 57-67 (PYANGPIHMGH). An L-isoleucyl-5'-AMP-binding site is contributed by Glu-556. Positions 597-601 (KMSKS) match the 'KMSKS' region motif. Lys-600 contributes to the ATP binding site. Cys-895, Cys-898, Cys-915, and Cys-918 together coordinate Zn(2+).

This sequence belongs to the class-I aminoacyl-tRNA synthetase family. IleS type 1 subfamily. As to quaternary structure, monomer. Requires Zn(2+) as cofactor.

The protein localises to the cytoplasm. It catalyses the reaction tRNA(Ile) + L-isoleucine + ATP = L-isoleucyl-tRNA(Ile) + AMP + diphosphate. Functionally, catalyzes the attachment of isoleucine to tRNA(Ile). As IleRS can inadvertently accommodate and process structurally similar amino acids such as valine, to avoid such errors it has two additional distinct tRNA(Ile)-dependent editing activities. One activity is designated as 'pretransfer' editing and involves the hydrolysis of activated Val-AMP. The other activity is designated 'posttransfer' editing and involves deacylation of mischarged Val-tRNA(Ile). This is Isoleucine--tRNA ligase from Levilactobacillus brevis (strain ATCC 367 / BCRC 12310 / CIP 105137 / JCM 1170 / LMG 11437 / NCIMB 947 / NCTC 947) (Lactobacillus brevis).